The chain runs to 917 residues: MLX-interacting protein (917 aa).

The disordered stretch occupies residues 1-72 (MAADVFMCSP…AGPGREEPPR (72 aa)). Position 2 is an N-acetylalanine (Ala-2). 3 positions are modified to phosphoserine: Ser-9, Ser-33, and Ser-39. The segment covering 27-37 (PEDDDDSDTDE) has biased composition (acidic residues). Residues 47-57 (ATSARAHASAA) are compositionally biased toward low complexity. Residues 73–327 (RQQIIHSGHF…PLQPNLDFMD (255 aa)) are required for cytoplasmic localization. Residues 322–445 (NLDFMDTFEP…LLSPGPAPAP (124 aa)) form a transactivation domain region. Disordered regions lie at residues 347–402 (LPPP…CERT) and 632–711 (SHST…TDPK). Residues 378 to 388 (LPNSLITSSAA) are compositionally biased toward polar residues. Low complexity predominate over residues 632–643 (SHSTSSQPSPVS). Ser-667 bears the Phosphoserine mark. The segment covering 670-685 (VPATGSSRDCPNSGQA) has biased composition (polar residues). Residues 686 to 704 (SPCPSEQSPSPQSPQNNCS) show a composition bias toward low complexity. The bHLH domain occupies 717–767 (KNRQKHISAEQKRRFNIRMGFNTLNSLISNNSKQTSHAITLQKTMEYITKL). The tract at residues 767–788 (LQQERMQMQEEARRLREEIEEL) is leucine-zipper. A mediates heterotypic interactions between MLXIP and MLX and is required for cytoplasmic localization region spans residues 830-879 (WKFWIFSMIIKPLFESFKGMVSTSSLEEFHRTALSWLDQHCSLPVLRPMV). The interval 897-917 (SQLPEQASEAVTRMGKRSGES) is disordered.

In terms of assembly, efficient DNA binding requires dimerization with another bHLH protein. Binds DNA as a homodimer or a heterodimer with MLX/TCFL4.

It localises to the cytoplasm. The protein localises to the nucleus. The protein resides in the mitochondrion outer membrane. Functionally, binds DNA as a heterodimer with MLX/TCFL4 and activates transcription. Binds to the canonical E box sequence 5'-CACGTG-3'. Plays a role in transcriptional activation of glycolytic target genes. Involved in glucose-responsive gene regulation. Regulates transcription in response to changes in cellular carbohydrate abundance such as occurs during fasting to feeding metabolic transition. Refeeding stimulates MLXIPL/ChREBP transcription factor, leading to increased BCKDK to PPM1K expression ratio, phosphorylation and activation of ACLY that ultimately results in the generation of malonyl-CoA and oxaloacetate immediate substrates of de novo lipogenesis and gluconeogenesis, respectively. The chain is MLX-interacting protein from Mus musculus (Mouse).